The following is a 561-amino-acid chain: NADH-quinone oxidoreductase subunit C/D (561 aa).

The NADH dehydrogenase I subunit C stretch occupies residues 1–152 (MLEKFSSKFN…YQVLYESDDL (152 aa)). Residues 176 to 561 (KYTFLNIGPS…LNIIAGELDR (386 aa)) are NADH dehydrogenase I subunit D.

The protein in the N-terminal section; belongs to the complex I 30 kDa subunit family. This sequence in the C-terminal section; belongs to the complex I 49 kDa subunit family. As to quaternary structure, NDH-1 is composed of 13 different subunits. Subunits NuoB, CD, E, F, and G constitute the peripheral sector of the complex.

The protein resides in the cell inner membrane. It catalyses the reaction a quinone + NADH + 5 H(+)(in) = a quinol + NAD(+) + 4 H(+)(out). Functionally, NDH-1 shuttles electrons from NADH, via FMN and iron-sulfur (Fe-S) centers, to quinones in the respiratory chain. The immediate electron acceptor for the enzyme in this species is believed to be ubiquinone. Couples the redox reaction to proton translocation (for every two electrons transferred, four hydrogen ions are translocated across the cytoplasmic membrane), and thus conserves the redox energy in a proton gradient. The polypeptide is NADH-quinone oxidoreductase subunit C/D (Campylobacter fetus subsp. fetus (strain 82-40)).